Here is an 804-residue protein sequence, read N- to C-terminus: DNA gyrase subunit A (804 aa).

The region spanning 31-495 is the Topo IIA-type catalytic domain; it reads IPDVRDGLKP…QSIEYNEEEL (465 aa). The O-(5'-phospho-DNA)-tyrosine intermediate role is filled by Tyr-119. A GyrA-box motif is present at residues 522–528; the sequence is QKRGGKG.

This sequence belongs to the type II topoisomerase GyrA/ParC subunit family. Heterotetramer, composed of two GyrA and two GyrB chains. In the heterotetramer, GyrA contains the active site tyrosine that forms a transient covalent intermediate with DNA, while GyrB binds cofactors and catalyzes ATP hydrolysis.

Its subcellular location is the cytoplasm. It carries out the reaction ATP-dependent breakage, passage and rejoining of double-stranded DNA.. In terms of biological role, a type II topoisomerase that negatively supercoils closed circular double-stranded (ds) DNA in an ATP-dependent manner to modulate DNA topology and maintain chromosomes in an underwound state. Negative supercoiling favors strand separation, and DNA replication, transcription, recombination and repair, all of which involve strand separation. Also able to catalyze the interconversion of other topological isomers of dsDNA rings, including catenanes and knotted rings. Type II topoisomerases break and join 2 DNA strands simultaneously in an ATP-dependent manner. The polypeptide is DNA gyrase subunit A (Thermotoga maritima (strain ATCC 43589 / DSM 3109 / JCM 10099 / NBRC 100826 / MSB8)).